Here is a 300-residue protein sequence, read N- to C-terminus: NAD kinase (300 aa).

The active-site Proton acceptor is the Asp-75. Residues 75 to 76 (DG), 149 to 150 (ND), Arg-177, Asp-179, 190 to 195 (TAYALS), Ala-214, and Gln-248 each bind NAD(+).

The protein belongs to the NAD kinase family. Requires a divalent metal cation as cofactor.

The protein resides in the cytoplasm. The enzyme catalyses NAD(+) + ATP = ADP + NADP(+) + H(+). In terms of biological role, involved in the regulation of the intracellular balance of NAD and NADP, and is a key enzyme in the biosynthesis of NADP. Catalyzes specifically the phosphorylation on 2'-hydroxyl of the adenosine moiety of NAD to yield NADP. The chain is NAD kinase from Burkholderia cenocepacia (strain HI2424).